The primary structure comprises 195 residues: ATP-dependent Clp protease proteolytic subunit (195 aa).

Ser-101 acts as the Nucleophile in catalysis. His-126 is an active-site residue.

It belongs to the peptidase S14 family.

The protein resides in the plastid. Its subcellular location is the chloroplast stroma. It carries out the reaction Hydrolysis of proteins to small peptides in the presence of ATP and magnesium. alpha-casein is the usual test substrate. In the absence of ATP, only oligopeptides shorter than five residues are hydrolyzed (such as succinyl-Leu-Tyr-|-NHMec, and Leu-Tyr-Leu-|-Tyr-Trp, in which cleavage of the -Tyr-|-Leu- and -Tyr-|-Trp bonds also occurs).. Its function is as follows. Cleaves peptides in various proteins in a process that requires ATP hydrolysis. Has a chymotrypsin-like activity. Plays a major role in the degradation of misfolded proteins. This Bigelowiella natans (Pedinomonas minutissima) protein is ATP-dependent Clp protease proteolytic subunit.